The sequence spans 79 residues: Sulfur carrier protein TusA (79 aa).

Residue Cys-17 is the Cysteine persulfide intermediate of the active site.

Belongs to the sulfur carrier protein TusA family.

It is found in the cytoplasm. In terms of biological role, sulfur carrier protein which probably makes part of a sulfur-relay system. The sequence is that of Sulfur carrier protein TusA from Actinobacillus pleuropneumoniae serotype 7 (strain AP76).